We begin with the raw amino-acid sequence, 430 residues long: MLDPNLLRNEPDAVAEKLARRGFKLDVDKLGALEERRKVLQVKTENLQAERNSRSKSIGQAKARGEDIEPLRLEVNKLGEELDAAKAELDALQAEIRDIALTIPNLPADEVPVGKDENDNVEVSRWGTPREFDFEVRDHVTLGEMHSGLDFAAAVKLTGSRFVVMKGQIARMHRALSQFMLDLHTEQHGYSENYVPYLVNQDTLYGTGQLPKFAGDLFHTRPLEEEADTSNYALIPTAEVPLTNLVRGEIIDEDDLPIKMTAHTPCFRSEAGSYGRDTRGLIRMHQFDKVEMVQIVRPEDSMAALEEMTGHAEKVLQLLGLPYRKIILCTGDMGFGACKTYDLEVWIPAQNTYREISSCSNVWDFQARRMQARCRSKSDKKTRLVHTLNGSGLAVGRTLVAVMENYQQADGRIEVPEVLRPYMNGLEYIG.

An L-serine-binding site is contributed by 237 to 239 (TAE). ATP is bound at residue 268–270 (RSE). E291 is a binding site for L-serine. 355–358 (EISS) is an ATP binding site. S391 provides a ligand contact to L-serine.

This sequence belongs to the class-II aminoacyl-tRNA synthetase family. Type-1 seryl-tRNA synthetase subfamily. In terms of assembly, homodimer. The tRNA molecule binds across the dimer.

It is found in the cytoplasm. The catalysed reaction is tRNA(Ser) + L-serine + ATP = L-seryl-tRNA(Ser) + AMP + diphosphate + H(+). It catalyses the reaction tRNA(Sec) + L-serine + ATP = L-seryl-tRNA(Sec) + AMP + diphosphate + H(+). It functions in the pathway aminoacyl-tRNA biosynthesis; selenocysteinyl-tRNA(Sec) biosynthesis; L-seryl-tRNA(Sec) from L-serine and tRNA(Sec): step 1/1. Catalyzes the attachment of serine to tRNA(Ser). Is also able to aminoacylate tRNA(Sec) with serine, to form the misacylated tRNA L-seryl-tRNA(Sec), which will be further converted into selenocysteinyl-tRNA(Sec). The polypeptide is Serine--tRNA ligase (Escherichia coli O139:H28 (strain E24377A / ETEC)).